Here is a 542-residue protein sequence, read N- to C-terminus: Propane 2-monooxygenase, hydroxylase component large subunit (542 aa).

The Fe cation site is built by glutamate 97, glutamate 127, histidine 130, glutamate 192, glutamate 226, and histidine 229.

It belongs to the TmoA/XamoA family. The propane 2-monooxygenase multicomponent enzyme system is composed of an electron transfer component and a monooxygenase component interacting with the effector protein MimD. The electron transfer component is composed of a reductase (MimB), and the monooxygenase component is formed by a large subunit (MimA) and a small subunit (MimC). Requires the presence of the chaperonin-like protein MimG to ensure a productive folding, resulting of a soluble MimA, which leads to the active form of MimABCD. It depends on Fe(2+) as a cofactor.

It catalyses the reaction propane + NADH + O2 + H(+) = propan-2-ol + NAD(+) + H2O. It carries out the reaction acetone + NADH + O2 + H(+) = hydroxyacetone + NAD(+) + H2O. The enzyme catalyses butan-2-one + NADH + O2 + H(+) = 1-hydroxy-2-butanone + NAD(+) + H2O. The catalysed reaction is phenol + NADH + O2 + H(+) = hydroquinone + NAD(+) + H2O. Functionally, component of the propane 2-monooxygenase multicomponent enzyme system which is involved in the degradation of propane via the O2-dependent hydroxylation of propane. Also involved in the degradation of acetone via the O2-dependent hydroxylation of acetone. Also able to catalyze the oxidation of phenol, methylethylketone (2-butanone), 1-propanol and 2-propanol. The polypeptide is Propane 2-monooxygenase, hydroxylase component large subunit (Mycolicibacterium goodii (Mycobacterium goodii)).